The following is a 652-amino-acid chain: MYLSIIILPLLGCIVSGFLGRKVGVKGAQLITCSNVVITTILSILAFIEVGFNNIPVTINLFRWIDSEWFNIIWGFQFDSLTVSMLIPVLIISSLVHIYSISYMSSDPHNQRFFSYLSLFTFMMIILVTANNYLLMFVGWEGVGVCSYLLVSFWFTRIAANQSSISAFLANRVGDCFLTIGMFAILWSLGNLDYSTVFSLAPYINSKVVLIIGICLLIGAMAKSSQVGLHVWLPMAMEGPTPVSALIHAATMVTAGVYLLMRSSPLIEYNSTVLLLCLWLGAITTVFSSLIGLFQQDIKKVIAYSTMSQLGMMVIAIGLSSYNVALFHLINHAFYKALLFLGAGSVIHAVADNQDFRKYGGLINFLPLTYSVMLIASLSLVAFPFMTGFYSKDFILESAYGQFSFSGVAVYIIATIGAIFTTLYSVKVLYLTFLSNPNGTRAYYNYKPALEGDLFLTLPLIILAIFSIFFGFITKDIFIGLGSNFFGDNSLFIHPTHEIMIDTEFAVPVLFKLLPFIFTISFSIIALTISEFLSELVIYFKLSRLGYNIFGFFNQRFLIELFYNKYITNLILDLGGQMTKILDKGSIELFGPFGLEKGLVNFSKNISSLSTSHVTTYALYILVAFILYLLYNYLSFNFLPFLIAGLTILTTI.

A run of 16 helical transmembrane segments spans residues Met-1–Arg-21, Leu-30–Val-50, Ile-72–Ile-92, Leu-119–Gly-139, Trp-140–Ala-160, Phe-177–Val-197, Leu-200–Ala-220, Thr-241–Met-261, Leu-274–Phe-294, Val-301–Leu-319, Asn-331–Ala-351, Phe-365–Phe-385, Phe-403–Leu-423, Leu-454–Thr-474, Phe-505–Ile-525, and Leu-619–Leu-639.

This sequence belongs to the complex I subunit 5 family.

It is found in the mitochondrion inner membrane. It catalyses the reaction a ubiquinone + NADH + 5 H(+)(in) = a ubiquinol + NAD(+) + 4 H(+)(out). Core subunit of the mitochondrial membrane respiratory chain NADH dehydrogenase (Complex I) that is believed to belong to the minimal assembly required for catalysis. Complex I functions in the transfer of electrons from NADH to the respiratory chain. The immediate electron acceptor for the enzyme is believed to be ubiquinone. This chain is NADH-ubiquinone oxidoreductase chain 5 (ND5), found in Podospora anserina (strain S / ATCC MYA-4624 / DSM 980 / FGSC 10383) (Pleurage anserina).